Reading from the N-terminus, the 92-residue chain is Small ribosomal subunit protein uS19 (92 aa).

It belongs to the universal ribosomal protein uS19 family.

Its function is as follows. Protein S19 forms a complex with S13 that binds strongly to the 16S ribosomal RNA. This Mesorhizobium japonicum (strain LMG 29417 / CECT 9101 / MAFF 303099) (Mesorhizobium loti (strain MAFF 303099)) protein is Small ribosomal subunit protein uS19.